The sequence spans 219 residues: Large ribosomal subunit protein uL3 (219 aa).

The protein belongs to the universal ribosomal protein uL3 family. Part of the 50S ribosomal subunit. Forms a cluster with proteins L14 and L19.

Functionally, one of the primary rRNA binding proteins, it binds directly near the 3'-end of the 23S rRNA, where it nucleates assembly of the 50S subunit. In Salinispora tropica (strain ATCC BAA-916 / DSM 44818 / JCM 13857 / NBRC 105044 / CNB-440), this protein is Large ribosomal subunit protein uL3.